A 254-amino-acid polypeptide reads, in one-letter code: Probable WRKY transcription factor 67 (254 aa).

Positions Ser102–Phe170 form a DNA-binding region, WRKY.

Belongs to the WRKY group III family.

It is found in the nucleus. In terms of biological role, transcription factor. Interacts specifically with the W box (5'-(T)TGAC[CT]-3'), a frequently occurring elicitor-responsive cis-acting element. The sequence is that of Probable WRKY transcription factor 67 (WRKY67) from Arabidopsis thaliana (Mouse-ear cress).